A 414-amino-acid chain; its full sequence is Tyrosine--tRNA ligase (414 aa).

Tyrosine 35 provides a ligand contact to L-tyrosine. Positions proline 40–histidine 49 match the 'HIGH' region motif. The L-tyrosine site is built by tyrosine 164 and glutamine 168. Positions lysine 226–threonine 230 match the 'KMSKS' region motif. Position 229 (lysine 229) interacts with ATP. Positions threonine 347–lysine 414 constitute an S4 RNA-binding domain.

The protein belongs to the class-I aminoacyl-tRNA synthetase family. TyrS type 1 subfamily. As to quaternary structure, homodimer.

It localises to the cytoplasm. The catalysed reaction is tRNA(Tyr) + L-tyrosine + ATP = L-tyrosyl-tRNA(Tyr) + AMP + diphosphate + H(+). Its function is as follows. Catalyzes the attachment of tyrosine to tRNA(Tyr) in a two-step reaction: tyrosine is first activated by ATP to form Tyr-AMP and then transferred to the acceptor end of tRNA(Tyr). The sequence is that of Tyrosine--tRNA ligase from Mycoplasma capricolum subsp. capricolum (strain California kid / ATCC 27343 / NCTC 10154).